Reading from the N-terminus, the 157-residue chain is 2-C-methyl-D-erythritol 2,4-cyclodiphosphate synthase (157 aa).

2 residues coordinate a divalent metal cation: Asp8 and His10. Residues 8–10 (DVH) and 34–35 (HS) contribute to the 4-CDP-2-C-methyl-D-erythritol 2-phosphate site. His42 lines the a divalent metal cation pocket. Residues 56–58 (DIG), 132–135 (TTNE), and Arg142 contribute to the 4-CDP-2-C-methyl-D-erythritol 2-phosphate site.

It belongs to the IspF family. Homotrimer. The cofactor is a divalent metal cation.

It carries out the reaction 4-CDP-2-C-methyl-D-erythritol 2-phosphate = 2-C-methyl-D-erythritol 2,4-cyclic diphosphate + CMP. It functions in the pathway isoprenoid biosynthesis; isopentenyl diphosphate biosynthesis via DXP pathway; isopentenyl diphosphate from 1-deoxy-D-xylulose 5-phosphate: step 4/6. Functionally, involved in the biosynthesis of isopentenyl diphosphate (IPP) and dimethylallyl diphosphate (DMAPP), two major building blocks of isoprenoid compounds. Catalyzes the conversion of 4-diphosphocytidyl-2-C-methyl-D-erythritol 2-phosphate (CDP-ME2P) to 2-C-methyl-D-erythritol 2,4-cyclodiphosphate (ME-CPP) with a corresponding release of cytidine 5-monophosphate (CMP). This is 2-C-methyl-D-erythritol 2,4-cyclodiphosphate synthase from Chlorobium phaeovibrioides (strain DSM 265 / 1930) (Prosthecochloris vibrioformis (strain DSM 265)).